Consider the following 175-residue polypeptide: Peptide deformylase (175 aa).

Residues C96 and H138 each contribute to the Fe cation site. Residue E139 is part of the active site. H142 lines the Fe cation pocket.

The protein belongs to the polypeptide deformylase family. Fe(2+) is required as a cofactor.

It carries out the reaction N-terminal N-formyl-L-methionyl-[peptide] + H2O = N-terminal L-methionyl-[peptide] + formate. In terms of biological role, removes the formyl group from the N-terminal Met of newly synthesized proteins. Requires at least a dipeptide for an efficient rate of reaction. N-terminal L-methionine is a prerequisite for activity but the enzyme has broad specificity at other positions. This is Peptide deformylase from Rhodopseudomonas palustris (strain BisB18).